A 183-amino-acid chain; its full sequence is Shikimate kinase (183 aa).

15-20 (GSGKST) provides a ligand contact to ATP. Residue S19 participates in Mg(2+) binding. 3 residues coordinate substrate: D37, R61, and G85. R123 contributes to the ATP binding site. R142 lines the substrate pocket.

This sequence belongs to the shikimate kinase family. In terms of assembly, monomer. It depends on Mg(2+) as a cofactor.

The protein localises to the cytoplasm. The catalysed reaction is shikimate + ATP = 3-phosphoshikimate + ADP + H(+). It functions in the pathway metabolic intermediate biosynthesis; chorismate biosynthesis; chorismate from D-erythrose 4-phosphate and phosphoenolpyruvate: step 5/7. Catalyzes the specific phosphorylation of the 3-hydroxyl group of shikimic acid using ATP as a cosubstrate. The sequence is that of Shikimate kinase from Paracidovorax citrulli (strain AAC00-1) (Acidovorax citrulli).